The chain runs to 953 residues: UvrABC system protein A (953 aa).

Position 33-40 (33-40) interacts with ATP; that stretch reads GLSGSGKS. ABC transporter domains lie at 320–599 and 619–949; these read WGST…EESI and GHDN…RYLK. 652-659 serves as a coordination point for ATP; that stretch reads GVSGSGKS. Residues 752–778 form a C4-type zinc finger; the sequence is CEACQGDGLIKIEMHFLPDVYVKCDIC.

Belongs to the ABC transporter superfamily. UvrA family. Forms a heterotetramer with UvrB during the search for lesions.

The protein localises to the cytoplasm. Its function is as follows. The UvrABC repair system catalyzes the recognition and processing of DNA lesions. UvrA is an ATPase and a DNA-binding protein. A damage recognition complex composed of 2 UvrA and 2 UvrB subunits scans DNA for abnormalities. When the presence of a lesion has been verified by UvrB, the UvrA molecules dissociate. This chain is UvrABC system protein A, found in Rickettsia bellii (strain RML369-C).